The following is a 359-amino-acid chain: Glutamine synthetase (359 aa).

Residues Val-28–Gly-107 form the GS beta-grasp domain. The 246-residue stretch at His-114–His-359 folds into the GS catalytic domain. Residue Ser-273 is modified to Phosphoserine. Thr-303 bears the Phosphothreonine mark. Ser-305 is subject to Phosphoserine.

Belongs to the glutamine synthetase family. Homooctamer.

It is found in the cytoplasm. It catalyses the reaction L-glutamate + NH4(+) + ATP = L-glutamine + ADP + phosphate + H(+). The protein is Glutamine synthetase (gln1) of Schizosaccharomyces pombe (strain 972 / ATCC 24843) (Fission yeast).